A 117-amino-acid chain; its full sequence is Large ribosomal subunit protein bL19 (117 aa).

Belongs to the bacterial ribosomal protein bL19 family.

This protein is located at the 30S-50S ribosomal subunit interface and may play a role in the structure and function of the aminoacyl-tRNA binding site. This is Large ribosomal subunit protein bL19 from Vibrio parahaemolyticus serotype O3:K6 (strain RIMD 2210633).